The sequence spans 257 residues: UPF0246 protein Ent638_0568 (257 aa).

It belongs to the UPF0246 family.

This chain is UPF0246 protein Ent638_0568, found in Enterobacter sp. (strain 638).